A 180-amino-acid chain; its full sequence is Large ribosomal subunit protein uL6 (180 aa).

Belongs to the universal ribosomal protein uL6 family. Part of the 50S ribosomal subunit.

In terms of biological role, this protein binds to the 23S rRNA, and is important in its secondary structure. It is located near the subunit interface in the base of the L7/L12 stalk, and near the tRNA binding site of the peptidyltransferase center. In Clostridium botulinum (strain 657 / Type Ba4), this protein is Large ribosomal subunit protein uL6.